We begin with the raw amino-acid sequence, 191 residues long: MRLPLLVSAGVLLVALLPCPPCRALLSRGPVLGARQAPQHPQALDFLQPQQQPQQPQPRPVLLRMGEEYFLRLGNLNKSPAAPLSPASSPLTGSSGNRPDEVAANFFRALLQQLPLPRRPLDSPSGPAERGAENALSSRQEAPERERRSEEPPISLDLTFHLLREVLEMARAEQLAQQAHSNRKLMEIIGK.

The N-terminal stretch at 1-24 (MRLPLLVSAGVLLVALLPCPPCRA) is a signal peptide. Residues 25–148 (LLSRGPVLGA…RQEAPERERR (124 aa)) constitute a propeptide that is removed on maturation. The disordered stretch occupies residues 115–153 (PLPRRPLDSPSGPAERGAENALSSRQEAPERERRSEEPP). A compositionally biased stretch (basic and acidic residues) spans 141–151 (EAPERERRSEE). Isoleucine amide is present on Ile-189.

It belongs to the sauvagine/corticotropin-releasing factor/urotensin I family. In terms of assembly, interacts (via C-terminus) with CRFR1 (via N-terminal extracellular domain). In terms of tissue distribution, produced by the hypothalamus.

The protein resides in the secreted. Its function is as follows. Hormone regulating the release of corticotropin from pituitary gland. Induces NLRP6 in intestinal epithelial cells, hence may influence gut microbiota profile. This chain is Corticoliberin (CRH), found in Sus scrofa (Pig).